The following is a 135-amino-acid chain: Large ribosomal subunit protein uL16c (135 aa).

Belongs to the universal ribosomal protein uL16 family. As to quaternary structure, part of the 50S ribosomal subunit.

It localises to the plastid. The protein localises to the chloroplast. The chain is Large ribosomal subunit protein uL16c from Lotus japonicus (Lotus corniculatus var. japonicus).